The sequence spans 319 residues: Dehydrogenase/reductase SDR family member 9 (319 aa).

The first 17 residues, 1–17 (MLFWLLVLLILCGFLWN), serve as a signal peptide directing secretion. Residues 34–58 (ITGC…HVIA) and aspartate 83 contribute to the NAD(+) site. Serine 164 serves as a coordination point for substrate. The Proton acceptor role is filled by tyrosine 176. Residue lysine 180 participates in NAD(+) binding.

This sequence belongs to the short-chain dehydrogenases/reductases (SDR) family. In terms of assembly, homotetramer.

The protein localises to the microsome membrane. It is found in the endoplasmic reticulum membrane. The catalysed reaction is 3beta-hydroxy-5alpha-pregnane-20-one + NAD(+) = 5alpha-pregnane-3,20-dione + NADH + H(+). It catalyses the reaction 17beta-hydroxy-5alpha-androstan-3-one + NAD(+) = 5alpha-androstan-3,17-dione + NADH + H(+). It carries out the reaction androsterone + NAD(+) = 5alpha-androstan-3,17-dione + NADH + H(+). The enzyme catalyses 5alpha-androstane-3alpha,17beta-diol + NAD(+) = 17beta-hydroxy-5alpha-androstan-3-one + NADH + H(+). The catalysed reaction is all-trans-retinol + NAD(+) = all-trans-retinal + NADH + H(+). It catalyses the reaction 3alpha-hydroxy-5alpha-pregnan-20-one + NAD(+) = 5alpha-pregnane-3,20-dione + NADH + H(+). 3-alpha-hydroxysteroid dehydrogenase that converts 3-alpha-tetrahydroprogesterone (allopregnanolone) to dihydroxyprogesterone and 3-alpha-androstanediol to dihydroxyprogesterone. Also plays a role in the biosynthesis of retinoic acid from retinaldehyde. Can utilize both NADH and NADPH. The sequence is that of Dehydrogenase/reductase SDR family member 9 (DHRS9) from Bos taurus (Bovine).